Reading from the N-terminus, the 96-residue chain is Small ribosomal subunit protein uS17 (96 aa).

It belongs to the universal ribosomal protein uS17 family. In terms of assembly, part of the 30S ribosomal subunit.

Functionally, one of the primary rRNA binding proteins, it binds specifically to the 5'-end of 16S ribosomal RNA. This is Small ribosomal subunit protein uS17 from Deinococcus radiodurans (strain ATCC 13939 / DSM 20539 / JCM 16871 / CCUG 27074 / LMG 4051 / NBRC 15346 / NCIMB 9279 / VKM B-1422 / R1).